A 338-amino-acid polypeptide reads, in one-letter code: Holliday junction branch migration complex subunit RuvB (338 aa).

The large ATPase domain (RuvB-L) stretch occupies residues 4 to 187 (ADKDRLVSGD…FGISEHMAYY (184 aa)). ATP is bound by residues L26, R27, G68, K71, T72, T73, 134–136 (EDF), R177, Y187, and R224. Mg(2+) is bound at residue T72. The tract at residues 188–258 (SADDLSEIVK…MVDHALDQLQ (71 aa)) is small ATPAse domain (RuvB-S). Positions 261 to 338 (QQGLDQIDRK…AHMGMSAEQH (78 aa)) are head domain (RuvB-H). R316 and R321 together coordinate DNA.

This sequence belongs to the RuvB family. As to quaternary structure, homohexamer. Forms an RuvA(8)-RuvB(12)-Holliday junction (HJ) complex. HJ DNA is sandwiched between 2 RuvA tetramers; dsDNA enters through RuvA and exits via RuvB. An RuvB hexamer assembles on each DNA strand where it exits the tetramer. Each RuvB hexamer is contacted by two RuvA subunits (via domain III) on 2 adjacent RuvB subunits; this complex drives branch migration. In the full resolvosome a probable DNA-RuvA(4)-RuvB(12)-RuvC(2) complex forms which resolves the HJ.

It is found in the cytoplasm. It catalyses the reaction ATP + H2O = ADP + phosphate + H(+). Functionally, the RuvA-RuvB-RuvC complex processes Holliday junction (HJ) DNA during genetic recombination and DNA repair, while the RuvA-RuvB complex plays an important role in the rescue of blocked DNA replication forks via replication fork reversal (RFR). RuvA specifically binds to HJ cruciform DNA, conferring on it an open structure. The RuvB hexamer acts as an ATP-dependent pump, pulling dsDNA into and through the RuvAB complex. RuvB forms 2 homohexamers on either side of HJ DNA bound by 1 or 2 RuvA tetramers; 4 subunits per hexamer contact DNA at a time. Coordinated motions by a converter formed by DNA-disengaged RuvB subunits stimulates ATP hydrolysis and nucleotide exchange. Immobilization of the converter enables RuvB to convert the ATP-contained energy into a lever motion, pulling 2 nucleotides of DNA out of the RuvA tetramer per ATP hydrolyzed, thus driving DNA branch migration. The RuvB motors rotate together with the DNA substrate, which together with the progressing nucleotide cycle form the mechanistic basis for DNA recombination by continuous HJ branch migration. Branch migration allows RuvC to scan DNA until it finds its consensus sequence, where it cleaves and resolves cruciform DNA. This is Holliday junction branch migration complex subunit RuvB from Lacticaseibacillus paracasei (strain ATCC 334 / BCRC 17002 / CCUG 31169 / CIP 107868 / KCTC 3260 / NRRL B-441) (Lactobacillus paracasei).